Here is a 121-residue protein sequence, read N- to C-terminus: DNA-directed RNA polymerase subunit omega (121 aa).

Belongs to the RNA polymerase subunit omega family. As to quaternary structure, the RNAP catalytic core consists of 2 alpha, 1 beta, 1 beta' and 1 omega subunit. When a sigma factor is associated with the core the holoenzyme is formed, which can initiate transcription.

The catalysed reaction is RNA(n) + a ribonucleoside 5'-triphosphate = RNA(n+1) + diphosphate. Promotes RNA polymerase assembly. Latches the N- and C-terminal regions of the beta' subunit thereby facilitating its interaction with the beta and alpha subunits. The sequence is that of DNA-directed RNA polymerase subunit omega from Syntrophobacter fumaroxidans (strain DSM 10017 / MPOB).